Consider the following 359-residue polypeptide: Guanine nucleotide-binding protein subunit alpha-11 (359 aa).

2 S-palmitoyl cysteine lipidation sites follow: Cys-9 and Cys-10. The G-alpha domain occupies Arg-38–Val-359. Positions Lys-41–Thr-54 are G1 motif. Residues Gly-46–Ser-53 and Leu-180–Arg-183 each bind GTP. Ser-53 provides a ligand contact to Mg(2+). Residues Asp-178–Thr-186 are G2 motif. Thr-186 provides a ligand contact to Mg(2+). Residues Phe-201 to Arg-210 form a G3 motif region. The interval Ile-270–Asp-277 is G4 motif. GTP-binding positions include Asn-274–Asp-277 and Ala-331. A G5 motif region spans residues Thr-329–Thr-334.

It belongs to the G-alpha family. G(q) subfamily. G proteins are composed of 3 units; alpha, beta and gamma. The alpha chain contains the guanine nucleotide binding site. Interacts with RGS22. Interacts with NTSR1.

The protein resides in the cell membrane. It localises to the cytoplasm. It carries out the reaction GTP + H2O = GDP + phosphate + H(+). Its function is as follows. Guanine nucleotide-binding proteins (G proteins) function as transducers downstream of G protein-coupled receptors (GPCRs) in numerous signaling cascades. The alpha chain contains the guanine nucleotide binding site and alternates between an active, GTP-bound state and an inactive, GDP-bound state. Signaling by an activated GPCR promotes GDP release and GTP binding. The alpha subunit has a low GTPase activity that converts bound GTP to GDP, thereby terminating the signal. Both GDP release and GTP hydrolysis are modulated by numerous regulatory proteins. Signaling is mediated via phospholipase C-beta-dependent inositol lipid hydrolysis for signal propagation: activates phospholipase C-beta: following GPCR activation, GNA11 activates PLC-beta (PLCB1, PLCB2, PLCB3 or PLCB4), leading to production of diacylglycerol (DAG) and inositol 1,4,5-trisphosphate (IP3). Transduces FFAR4 signaling in response to long-chain fatty acids (LCFAs). Together with GNAQ, required for heart development. In the respiratory epithelium, transmits OXGR1-dependent signals that lead to downstream intracellular Ca(2+) release and mucocilliary clearance of airborne pathogens. In Rattus norvegicus (Rat), this protein is Guanine nucleotide-binding protein subunit alpha-11 (Gna11).